A 944-amino-acid chain; its full sequence is Calcium-transporting ATPase type 2C member 2 (944 aa).

Residues 1–104 (MGRRLKFLQK…DNAEPVWKKY (104 aa)) are Cytoplasmic-facing. Residues 69-93 (VDLDSGLSEFAVAQRRLVHGWNEFV) form an interaction with ORAI1 region. The chain crosses the membrane as a helical span at residues 105–125 (LDQFRNPLILLLLGSSVVSVL). Topologically, residues 126–127 (TK) are extracellular. The chain crosses the membrane as a helical span at residues 128 to 148 (EYEDAVSIALAVLIVVTVGFI). The Cytoplasmic segment spans residues 149–229 (QEYRSEKSLE…EVEPCGKTDS (81 aa)). A helical transmembrane segment spans residues 230 to 250 (PLADGGDLSTLSNVVFMGTLV). At 251 to 291 (QCGKGQGVVIGTGEQSQFGEVFKMMRAEETPKTPLQKSMDK) the chain is on the extracellular side. Threonine 262 is subject to Phosphothreonine. Serine 266 is subject to Phosphoserine. A helical transmembrane segment spans residues 292–312 (LGKQLTIFSFGIIGLLMLVGW). The Cytoplasmic segment spans residues 313–329 (VQGKPFLSMFTVGVSLA). Ca(2+) is bound by residues valine 330, alanine 331, isoleucine 333, and glutamate 335. Residues 330 to 350 (VAAIPEGLPIVVMVTLVLGVL) traverse the membrane as a helical segment. At 351–748 (RMAKKRVIVK…IAALSLITLS (398 aa)) the chain is on the extracellular side. The active-site 4-aspartylphosphate intermediate is aspartate 377. Residues aspartate 672 and aspartate 676 each coordinate Mg(2+). The chain crosses the membrane as a helical span at residues 749-769 (TVCNLPSPLNAMQILWVNIIM). The Ca(2+) site is built by asparagine 766 and aspartate 770. Over 770–802 (DGPPAQSLGVEPVDRDALRRPPRSVGDTILNRA) the chain is Cytoplasmic. Residues 803-823 (LILRVLMSAAVIIGGTLFIFW) form a helical membrane-spanning segment. Residues 824–835 (REIPANGTSTPR) lie on the Extracellular side of the membrane. The helical transmembrane segment at 836 to 853 (TTTMAFTCFVFFDLFNAL) threads the bilayer. Over 854 to 872 (SCRSQTKLIFEIGFFRNRM) the chain is Cytoplasmic. Residues 873-893 (FLYSVLGSLLGQLAVIYAPPL) form a helical membrane-spanning segment. Residues 894 to 903 (QKVFQTENLS) are Extracellular-facing. A helical membrane pass occupies residues 904-924 (ALDLLLLTGLASSVFILSELL). Over 925–944 (KLWEKFLSRARPTQMLPEAV) the chain is Cytoplasmic.

It belongs to the cation transport ATPase (P-type) (TC 3.A.3) family. Type IIA subfamily. As to quaternary structure, interacts (via N-terminus) with ORAI1 (via N- and C-termini); this interaction regulates Ca(2+) influx at the plasma membrane. Expressed in hippocampal neurons (at protein level). Expressed in lactating mammary epithelium (at protein level).

Its subcellular location is the golgi apparatus. It is found in the trans-Golgi network membrane. The protein localises to the cell membrane. The protein resides in the basolateral cell membrane. The catalysed reaction is Ca(2+)(in) + ATP + H2O = Ca(2+)(out) + ADP + phosphate + H(+). The enzyme catalyses Mn(2+)(in) + ATP + H2O = Mn(2+)(out) + ADP + phosphate + H(+). Functionally, ATP-driven pump that supplies the Golgi apparatus with Ca(2+) and Mn(2+) ions, both essential cofactors for processing and trafficking of newly synthesized proteins in the secretory pathway. Within a catalytic cycle, acquires Ca(2+) or Mn(2+) ions on the cytoplasmic side of the membrane and delivers them to the lumenal side. The transfer of ions across the membrane is coupled to ATP hydrolysis and is associated with a transient phosphorylation that shifts the pump conformation from inward-facing to outward-facing state. Induces Ca(2+) influx independently of its ATP-driven pump function. At the basolateral membrane of mammary epithelial cells, interacts with Ca(2+) channel ORAI1 and mediates Ca(2+) entry independently of the Ca(2+) content of endoplasmic reticulum or Golgi stores. May facilitate transepithelial transport of large quantities of Ca(2+) for milk secretion via activation of Ca(2+) influx channels at the plasma membrane and active Ca(2+) transport at the Golgi apparatus. The sequence is that of Calcium-transporting ATPase type 2C member 2 from Mus musculus (Mouse).